The primary structure comprises 287 residues: Thiazole synthase (287 aa).

K111 functions as the Schiff-base intermediate with DXP in the catalytic mechanism. Residues G172, 203-204 (AG), and 225-226 (NT) contribute to the 1-deoxy-D-xylulose 5-phosphate site. Residues 268–287 (PQEGVISTRPYGSQADEIGS) form a disordered region.

It belongs to the ThiG family. Homotetramer. Forms heterodimers with either ThiH or ThiS.

It localises to the cytoplasm. The enzyme catalyses [ThiS sulfur-carrier protein]-C-terminal-Gly-aminoethanethioate + 2-iminoacetate + 1-deoxy-D-xylulose 5-phosphate = [ThiS sulfur-carrier protein]-C-terminal Gly-Gly + 2-[(2R,5Z)-2-carboxy-4-methylthiazol-5(2H)-ylidene]ethyl phosphate + 2 H2O + H(+). The protein operates within cofactor biosynthesis; thiamine diphosphate biosynthesis. Its function is as follows. Catalyzes the rearrangement of 1-deoxy-D-xylulose 5-phosphate (DXP) to produce the thiazole phosphate moiety of thiamine. Sulfur is provided by the thiocarboxylate moiety of the carrier protein ThiS. In vitro, sulfur can be provided by H(2)S. The protein is Thiazole synthase of Rhodopirellula baltica (strain DSM 10527 / NCIMB 13988 / SH1).